A 250-amino-acid polypeptide reads, in one-letter code: Kv channel-interacting protein 4 (250 aa).

The KIS stretch occupies residues asparagine 2–serine 44. Serine 17 and serine 56 each carry phosphoserine. Residues leucine 61 to proline 117 form the EF-hand 1; degenerate domain. EF-hand domains lie at aspartate 120–glycine 155, threonine 156–methionine 191, and alanine 204–isoleucine 239. Ca(2+)-binding residues include aspartate 133, aspartate 135, asparagine 137, aspartate 144, aspartate 169, asparagine 171, aspartate 173, tyrosine 175, glutamate 180, aspartate 217, asparagine 219, aspartate 221, and glutamate 228. An interaction with KCND2 region spans residues glutamate 237 to isoleucine 250.

This sequence belongs to the recoverin family. As to quaternary structure, component of heteromultimeric potassium channels. Identified in potassium channel complexes containing KCND1, KCND2, KCND3, KCNIP1, KCNIP2, KCNIP3, KCNIP4, DPP6 and DPP10. Interacts with the C-terminus of PSEN2 and probably PSEN1. Interacts with KCND2 and KCND3. As to expression, expressed in brain. Highly expressed by neurons in layers II-IV of cortex and in hippocampus, thalamus and the Purkinje cell layer of the cerebellum.

The protein resides in the cell membrane. It localises to the cytoplasm. Its subcellular location is the peroxisome. Regulatory subunit of Kv4/D (Shal)-type voltage-gated rapidly inactivating A-type potassium channels, such as KCND2/Kv4.2 and KCND3/Kv4.3. Modulates channel expression at the cell membrane, gating characteristics, inactivation kinetics and rate of recovery from inactivation in a calcium-dependent and isoform-specific manner. This chain is Kv channel-interacting protein 4 (Kcnip4), found in Mus musculus (Mouse).